Reading from the N-terminus, the 330-residue chain is MKDKAYDITIIGGGPIGLFAAFYAGLRGVTVKIIESLSELGGQPAILYPEKMIYDIPAYPSLTGVELTENLIKQLSRFEDRTTICLKEEVLTFDKVKGGFSIRTNKAEHFSKAIIIACGNGAFAPRTLGLESEENFADHNLFYNVHQLDQFAGQKVVICGGGDSAVDWALALEDIAESVTVVHRRDAFRAHEHSVELLKTSTVNLLTPYVPKALKGIGNLAEKLVIQKVKEDEVLELELDSLIVSFGFSTSNKNLKNWNLDYKRSSITVSPLFQTSQEGIFAIGDAAAYNGKVDLIATGFGEAPTAVNQAINYIYPDRDNRVVHSTSLID.

FAD-binding residues include E35, Q43, Y48, V90, F123, D285, and T326.

The protein belongs to the ferredoxin--NADP reductase type 2 family. As to quaternary structure, homodimer. FAD is required as a cofactor.

The catalysed reaction is 2 reduced [2Fe-2S]-[ferredoxin] + NADP(+) + H(+) = 2 oxidized [2Fe-2S]-[ferredoxin] + NADPH. The chain is Ferredoxin--NADP reductase from Streptococcus pyogenes serotype M6 (strain ATCC BAA-946 / MGAS10394).